Consider the following 232-residue polypeptide: Oxidoreductase 1 (232 aa).

The protein belongs to the MQO family. FAD serves as cofactor.

Its function is as follows. Oxidoreductase; part of the gene cluster that mediates the biosynthesis of elsinochromes, pigments consisting of at least four interconvertible tautomers (A, B, C and D) that have a core phenolic quinone to which various side chains are attached and which play an important role in fungal pathogenesis. The non-reducing polyketide synthase PKS1 was proposed to iteratively catalyze decarboxylation between acetyl-CoA and malonyl-CoA subunits for polyketide chain elongation. The released polyketide undergoes cyclization to form an aromatic ring, and proceeds via serial modification steps to produce the heptaketide back- bone of elsinochrome. As elsinochrome has a symmetrical structure, two identical heptaketides are fused to form a core 1,2-dihydrobenzo-perylene ring structure, which can then be successively modified to produce the various derivatives of elsinochrome. Some of these reactions may be cooperatively carried out, at least in part, by the products of RDT1, OXR1 and PKS1. PRF1, embedded within the elsinochrome cluster possibly functions to stabilize some of the biosynthetic enzymes required for elsinochrome production. As prefoldin is a hexamer containing 2 a and 4 b subunits, additional prefoldin subunits, whose coding genes may not immediately link to the elsinochrome biosynthetic gene cluster, are required to fulfill the chaperone function. In addition, no methyltransferase-coding gene exists within the biosynthetic gene cluster, even though elsinochrome has four methyl groups at positions C3, C7, C8 and C12. Apparently, the identified gene cluster does not contain the entire entourage of genes responsible for elsinochrome biosynthesis. Once elsinochrome is synthesized, it must be exported outside the fungal cells, which is probably accomplished by the ECT1 transporter, to avoid toxicity. In Elsinoe fawcettii (Citrus scab fungus), this protein is Oxidoreductase 1.